A 307-amino-acid polypeptide reads, in one-letter code: Urease accessory protein UreD (307 aa).

It belongs to the UreD family. As to quaternary structure, ureD, UreF and UreG form a complex that acts as a GTP-hydrolysis-dependent molecular chaperone, activating the urease apoprotein by helping to assemble the nickel containing metallocenter of UreC. The UreE protein probably delivers the nickel.

The protein resides in the cytoplasm. Required for maturation of urease via the functional incorporation of the urease nickel metallocenter. In Prochlorococcus marinus (strain NATL1A), this protein is Urease accessory protein UreD.